The sequence spans 381 residues: Protein-glutamate methylesterase/protein-glutamine glutaminase (381 aa).

A Response regulatory domain is found at 20 to 138 (RVMVVDDSVV…EIAAADIFKH (119 aa)). 4-aspartylphosphate is present on D71. The interval 154–176 (PAALASAREPEPRPIQATPVPAH) is disordered. The region spanning 183–373 (PFSTHAPRAL…PLQQIAPKLV (191 aa)) is the CheB-type methylesterase domain. Active-site residues include S197, H225, and D321.

Belongs to the CheB family. Post-translationally, phosphorylated by CheA. Phosphorylation of the N-terminal regulatory domain activates the methylesterase activity.

The protein localises to the cytoplasm. The enzyme catalyses [protein]-L-glutamate 5-O-methyl ester + H2O = L-glutamyl-[protein] + methanol + H(+). It catalyses the reaction L-glutaminyl-[protein] + H2O = L-glutamyl-[protein] + NH4(+). In terms of biological role, involved in chemotaxis. Part of a chemotaxis signal transduction system that modulates chemotaxis in response to various stimuli. Catalyzes the demethylation of specific methylglutamate residues introduced into the chemoreceptors (methyl-accepting chemotaxis proteins or MCP) by CheR. Also mediates the irreversible deamidation of specific glutamine residues to glutamic acid. The sequence is that of Protein-glutamate methylesterase/protein-glutamine glutaminase from Nitrobacter hamburgensis (strain DSM 10229 / NCIMB 13809 / X14).